The primary structure comprises 88 residues: UPF0335 protein WD_0557 (88 aa).

The protein belongs to the UPF0335 family.

This chain is UPF0335 protein WD_0557, found in Wolbachia pipientis wMel.